Reading from the N-terminus, the 393-residue chain is Phosphoglycerate kinase (393 aa).

Substrate contacts are provided by residues 22–24 (DFN), arginine 37, 60–63 (HLGR), arginine 119, and arginine 152. ATP is bound by residues lysine 202, glycine 293, glutamate 324, and 350–353 (GGDS).

It belongs to the phosphoglycerate kinase family. In terms of assembly, monomer.

It is found in the cytoplasm. The enzyme catalyses (2R)-3-phosphoglycerate + ATP = (2R)-3-phospho-glyceroyl phosphate + ADP. The protein operates within carbohydrate degradation; glycolysis; pyruvate from D-glyceraldehyde 3-phosphate: step 2/5. The protein is Phosphoglycerate kinase (pgk) of Borreliella burgdorferi (strain ATCC 35210 / DSM 4680 / CIP 102532 / B31) (Borrelia burgdorferi).